A 253-amino-acid chain; its full sequence is Ribosomal RNA small subunit methyltransferase G (253 aa).

Residues G84, F89, 135–136 (AE), and R154 contribute to the S-adenosyl-L-methionine site. The interval 228-253 (TPAKYPRREGVPTHQPLFWKAKEQSR) is disordered.

Belongs to the methyltransferase superfamily. RNA methyltransferase RsmG family.

Its subcellular location is the cytoplasm. Specifically methylates the N7 position of a guanine in 16S rRNA. The polypeptide is Ribosomal RNA small subunit methyltransferase G (Deinococcus radiodurans (strain ATCC 13939 / DSM 20539 / JCM 16871 / CCUG 27074 / LMG 4051 / NBRC 15346 / NCIMB 9279 / VKM B-1422 / R1)).